The primary structure comprises 162 residues: Phosphopantetheine adenylyltransferase (162 aa).

Ser11 serves as a coordination point for substrate. ATP-binding positions include 11-12 (SF) and His19. Substrate contacts are provided by Lys43, Val76, and Arg90. Residues 91–93 (GLR), Glu101, and 126–132 (HLYISSS) contribute to the ATP site.

This sequence belongs to the bacterial CoaD family. As to quaternary structure, homohexamer. Mg(2+) serves as cofactor.

The protein resides in the cytoplasm. The enzyme catalyses (R)-4'-phosphopantetheine + ATP + H(+) = 3'-dephospho-CoA + diphosphate. The protein operates within cofactor biosynthesis; coenzyme A biosynthesis; CoA from (R)-pantothenate: step 4/5. With respect to regulation, is inhibited by a series of cycloalkyl pyrimidines, which also show suppression of bacterial growth. Its function is as follows. Reversibly transfers an adenylyl group from ATP to 4'-phosphopantetheine, yielding dephospho-CoA (dPCoA) and pyrophosphate. The polypeptide is Phosphopantetheine adenylyltransferase (Streptococcus pneumoniae (strain ATCC BAA-255 / R6)).